A 487-amino-acid chain; its full sequence is Betaine aldehyde dehydrogenase (487 aa).

3 residues coordinate K(+): serine 26, isoleucine 27, and aspartate 93. 150 to 152 (GAW) is an NAD(+) binding site. Residue lysine 162 is the Charge relay system of the active site. NAD(+)-binding positions include 176–179 (KPSE) and 229–232 (SVPT). Leucine 244 is a K(+) binding site. The active-site Proton acceptor is glutamate 250. Residues glycine 252, cysteine 284, and glutamate 384 each coordinate NAD(+). Cysteine 284 functions as the Nucleophile in the catalytic mechanism. Cysteine 284 carries the cysteine sulfenic acid (-SOH) modification. K(+) is bound by residues lysine 454 and glycine 457. Glutamate 461 serves as the catalytic Charge relay system.

This sequence belongs to the aldehyde dehydrogenase family. As to quaternary structure, dimer of dimers. Requires K(+) as cofactor.

It catalyses the reaction betaine aldehyde + NAD(+) + H2O = glycine betaine + NADH + 2 H(+). It participates in amine and polyamine biosynthesis; betaine biosynthesis via choline pathway; betaine from betaine aldehyde: step 1/1. In terms of biological role, involved in the biosynthesis of the osmoprotectant glycine betaine. Catalyzes the irreversible oxidation of betaine aldehyde to the corresponding acid. The protein is Betaine aldehyde dehydrogenase of Sinorhizobium fredii (strain NBRC 101917 / NGR234).